The following is a 312-amino-acid chain: Ribosomal protein L11 methyltransferase (312 aa).

Residues Thr160, Gly181, Asp203, and Asn246 each coordinate S-adenosyl-L-methionine.

Belongs to the methyltransferase superfamily. PrmA family.

It localises to the cytoplasm. It carries out the reaction L-lysyl-[protein] + 3 S-adenosyl-L-methionine = N(6),N(6),N(6)-trimethyl-L-lysyl-[protein] + 3 S-adenosyl-L-homocysteine + 3 H(+). In terms of biological role, methylates ribosomal protein L11. In Staphylococcus aureus (strain USA300), this protein is Ribosomal protein L11 methyltransferase.